We begin with the raw amino-acid sequence, 727 residues long: Testis anion transporter 1 (727 aa).

Topologically, residues 1–23 are cytoplasmic; it reads MLTIFPFLEWMCMYRLKDWLLGD. A helical membrane pass occupies residues 24–44; it reads LLAGISVGLVQVPQGLTLSLL. At 45 to 47 the chain is on the extracellular side; it reads ARQ. The helical transmembrane segment at 48 to 68 threads the bilayer; sequence LIPPLNIAYAAFCSSVIYVIF. Topologically, residues 69 to 74 are cytoplasmic; sequence GSCHQM. A helical membrane pass occupies residues 75–95; sequence SIGSFFLVSALLINVLKISPL. The Extracellular portion of the chain corresponds to 96–130; the sequence is NNGHLVMGSFLKDEFSAPSYLMGYNKSLSVVATTT. N-linked (GlcNAc...) asparagine glycosylation occurs at Asn-120. A helical transmembrane segment spans residues 131–151; it reads FLTGIIQLIMGVLGLGFIATY. Residues 152–160 lie on the Cytoplasmic side of the membrane; sequence LPESAMSAY. Residues 161-181 form a helical membrane-spanning segment; that stretch reads LAAVALHIMLSQLTCIFGIMI. At 182-198 the chain is on the extracellular side; the sequence is SFHAGPISFFYDIINYC. Residues 199–219 traverse the membrane as a helical segment; the sequence is VALPKANSTSILLFLTVVVAL. The Cytoplasmic portion of the chain corresponds to 220 to 235; that stretch reads RINKCIRISFNQYPIE. A helical membrane pass occupies residues 236-256; it reads FPMELFLIIGFTVIGNKITMA. The Extracellular segment spans residues 257 to 283; it reads TETSQTLIDMIPYSFLFPVTPDFSVLP. A helical membrane pass occupies residues 284 to 304; the sequence is KIILQAISLSLVSSFLLVFLG. At 305-360 the chain is on the cytoplasmic side; that stretch reads KKIASLHNYSVNSNQDLIAIGLCNVVSSFFRSCVFTGAVARTIIQDKSGGRQQFAS. Residues 361-381 form a helical membrane-spanning segment; sequence LVGAGVMLLLMVKMGHFFYAL. Residues 382 to 383 lie on the Extracellular side of the membrane; it reads PN. A helical membrane pass occupies residues 384–404; it reads AVLAGIILSNVVPYLETISNL. Residues 405-424 lie on the Cytoplasmic side of the membrane; that stretch reads PSLWRQDQYDCALWMMTFSS. The helical transmembrane segment at 425–445 threads the bilayer; it reads SIFLGLDIGLIISVVSAFFIT. At 446–727 the chain is on the extracellular side; the sequence is SVRSHRAKIL…LPSFHLQHIF (282 aa). An STAS domain is found at 471–722; that stretch reads DYREIITIPG…NSLSRLPSFH (252 aa). Positions 592 to 727 are interaction with RACGAP1; the sequence is TVSSMSQKNQ…LPSFHLQHIF (136 aa).

Belongs to the SLC26A/SulP transporter (TC 2.A.53) family. In terms of assembly, interacts with RACGAP1. Interacts with CFTR; stimulates anion transport activity of CFTR. Post-translationally, N-glycosylated.

It localises to the membrane. The enzyme catalyses sulfate(out) + chloride(in) = sulfate(in) + chloride(out). The catalysed reaction is oxalate(in) + chloride(out) = oxalate(out) + chloride(in). Its function is as follows. Antiporter that mediates the exchange of sulfate and oxalate against chloride ions across a membrane. Stimulates anion transport activity of CFTR. May cooperate with CFTR in the regulation of chloride and bicarbonate ions fluxes required for activation of the ADCY10/PKA pathway during sperm motility and sperm capacitation. May play a role in sperm tail differentiation and motility and hence male fertility. This is Testis anion transporter 1 from Macaca fascicularis (Crab-eating macaque).